A 433-amino-acid polypeptide reads, in one-letter code: Mitochondrial inner membrane magnesium transporter MIT1 (433 aa).

The stretch at 257–298 (TNKLLRDMMKIKNNLQKLSNLLNALRTNIEKILNNENDMKNM) forms a coiled coil. Residues 360-380 (FILLNAKISFSTLLFSISSVV) traverse the membrane as a helical segment. The Extracellular segment spans residues 381 to 396 (TSLFGMNLKNFVEDSN). A helical transmembrane segment spans residues 397–417 (YAFIIVSIFVSVWSIIGIYVT). At 418–433 (KNINTLLKFFDRYNFR) the chain is on the mitochondrial matrix side.

The protein belongs to the CorA metal ion transporter (MIT) (TC 1.A.35) family.

The protein localises to the mitochondrion inner membrane. Mitochondrial inner membrane magnesium transporter required for mitochondrial magnesium homeostasis. Involved in the development of the sporozoite in the mosquito vector midgut. The sequence is that of Mitochondrial inner membrane magnesium transporter MIT1 from Plasmodium berghei (strain Anka).